A 452-amino-acid polypeptide reads, in one-letter code: NADH-ubiquinone oxidoreductase chain 4 (452 aa).

14 helical membrane passes run 7–27 (VLMSLLLLPLIVNLYPWIIAL), 57–77 (MMSFTLSALTIWVTVMMILAS), 95–115 (VILLIILINCFLSPNLIMFYI), 116–136 (WFEASLIPTMVLIMTWGYQPE), 145–165 (MIYTVAASLPMLMVLCKIFIV), 186–206 (MALAWVLTLGGFLVKLPMFTV), 218–238 (PIAGSMILAAILLKLGGYGIL), 251–271 (TSSLLSSVALVGAVSTSLICL), 278–298 (SLIAYSSVGHMGLMVAGALMS), 303–323 (FQAALAMMIAHGLSSSALFVM), 336–356 (LFLMKGLLVLAPTLTMWWFLF), 360–380 (NMAAPPSINLLSEIMLITSIL), 386–406 (AFILLGLTSFFTAAYCLYMYT), and 428–448 (LTLMTMHLVPTILIIFKPELI).

This sequence belongs to the complex I subunit 4 family.

It localises to the mitochondrion membrane. It carries out the reaction a ubiquinone + NADH + 5 H(+)(in) = a ubiquinol + NAD(+) + 4 H(+)(out). Its function is as follows. Core subunit of the mitochondrial membrane respiratory chain NADH dehydrogenase (Complex I) that is believed to belong to the minimal assembly required for catalysis. Complex I functions in the transfer of electrons from NADH to the respiratory chain. The immediate electron acceptor for the enzyme is believed to be ubiquinone. The polypeptide is NADH-ubiquinone oxidoreductase chain 4 (ND4) (Lumbricus terrestris (Common earthworm)).